An 85-amino-acid polypeptide reads, in one-letter code: Large ribosomal subunit protein bL27 (85 aa).

Residues 1 to 24 (MAHKKGQGSSRNGRDSNAQRRGVK) are disordered.

It belongs to the bacterial ribosomal protein bL27 family.

The sequence is that of Large ribosomal subunit protein bL27 from Syntrophus aciditrophicus (strain SB).